A 69-amino-acid polypeptide reads, in one-letter code: MSKLGVVLFVFLLLLPLAAPQPVGDQPADQPADRNAEARARFLHPFQYYTLYRYLTRFLHRYPIYYIRY.

The N-terminal stretch at Met1–Pro20 is a signal peptide. Residues Gln21–Tyr69 constitute a propeptide that is removed on maturation.

The protein belongs to the conotoxin M superfamily. Conopeptide Y family. As to expression, expressed by the venom duct.

Its subcellular location is the secreted. Tyrosine-rich conopeptide that targets several channels/receptors that are expressed in Xenopus oocytes. These targets are the voltage-gated potassium channels Kv1.6/KCNA6 (IC(50) is 170 nM) and Kv1.2/KCNA2 (IC(50) is 2.0 uM), Nav1.2/SCN2A (30% of inhibition), and N-methyl-D-aspartate (NMDA) receptor (GRIN1/GRIN2A/GRIN3B and GRIN1/GRIN2B/GRIN3B) (15% of inhibition). In vivo, causes the marine worm N.virens to move very slowly in contrast to control worms, and causes seizures (at 5 nmol) and death (20 nmol) to mice when intracranially injected. This is Conopeptide Y-Pl1 from Conus planorbis (Planorbis cone).